Reading from the N-terminus, the 402-residue chain is Serine/threonine-protein phosphatase 4 regulatory subunit 2 (402 aa).

Positions 258–402 are disordered; sequence NEDQDDENTG…FSKRNKASES (145 aa). Over residues 266 to 277 the composition is skewed to polar residues; sequence TGFSNQVINDNN. Over residues 278 to 319 the composition is skewed to acidic residues; sequence DSQEDDDEDSDYIEEDEGDEDEDDDDDEEEEEEEDGDEDEDE. Basic and acidic residues predominate over residues 320-337; sequence DKHFDIKVEEEAVKEDAN. Over residues 345–358 the composition is skewed to low complexity; the sequence is NVSNNSDDSSLQND.

This sequence belongs to the PPP4R2 family. As to quaternary structure, regulatory subunit (R2) of the histone H2A phosphatase complex (HTP-C) consisting of PPH3, PSY2 and PSY4.

It is found in the nucleus. Regulatory subunit of the histone H2A phosphatase complex, which dephosphorylates H2AS128ph (gamma-H2A) that has been displaced from sites of DNA lesions in the double-stranded DNA break repair process. Dephosphorylation is necessary for efficient recovery from the DNA damage checkpoint. In Candida glabrata (strain ATCC 2001 / BCRC 20586 / JCM 3761 / NBRC 0622 / NRRL Y-65 / CBS 138) (Yeast), this protein is Serine/threonine-protein phosphatase 4 regulatory subunit 2 (PSY4).